Reading from the N-terminus, the 36-residue chain is DSDCKDKLPACGEYRGSFCKLEKVKSNCEKTCGVKC.

The ShKT domain occupies 4 to 36 (CKDKLPACGEYRGSFCKLEKVKSNCEKTCGVKC). 3 disulfide bridges follow: Cys-4/Cys-36, Cys-11/Cys-28, and Cys-19/Cys-32.

The protein belongs to the sea anemone type 1 potassium channel toxin family. Type 1b subfamily.

The protein localises to the secreted. Its subcellular location is the nematocyst. Functionally, has hemolytic activity. Inhibits voltage-gated potassium channels (Kv1/KCNA). The polypeptide is U-metritoxin-Msn1a (Metridium senile (Brown sea anemone)).